Consider the following 4351-residue polypeptide: MTLVLLGVAMVLLHRAACEKPLEETITPLTWRFTHSLYNATIYENSAPKTYVESPVKMGMYLAEPHWVVKYRIISGDAAGVFKTEEHVVGNFCFLRIRTKSSNTALLNREVRDSYTLVVQASDKSLEFEALTQVVVHILDQNDLKPLFSPPSYRFTISEDRPLKSPICKVTATDADLGQNAEFYYAFNARSEVFAIHPTSGVVTVAGKLNVTWRGKYELQVLAVDRMRKISEGNGFGNLAPLVIYVEPVHRKPPVITLVVLNPPEGDEGDIYATVTVDTNGSGAEVDSLEVVGGDPGKYFKVLKSYAQGNEFNLVAVRDINWAEHLHGFNISLQTHSRSRFPSRSIIRAFHLPPYTLANLRFEKAVYRVKLSEFSPPGSRVALVRVTTALPTLRYALKPSSGSTVFKLNARTGLITTTKPVDFHEQNQYQLHVKTSLGQATTTVIIDIVDCNNHAPVFNRSSYEGTLDENIPPGTSVLTVTATDQDHGDNGHITYSIAGPKAVPFSIDPYLGVISTTKSMDYELMKRIYTFRVRASDWGSPFRQEKEVSVSLRLKNLNDNQPMFEEVNCTVSLRQDAPVGKSIMAVSAIDMDELQNLKYEIVSGNEQDYFHLNHFSGVISLKRSFMNLTAVRPTVYSLKITASDGKNYASPTTLKVTVVKDPRSEVPVQCDKTGVLTHITKTILQSAGLQGQEMGEEDFTSLGNYQINHHAPQFEDHFPQSIDILEQVPVNTPLAHLAATDPDPGFHGRLVYVIADGNEEGCFDIELETGLLTVAAALDYETTSFYVLNVTVYDLGTPPKSSWKLLTVTVKDWNDKPPRFPPGGYQLTISEDTEVGTTVAELKTRDTDSEDNGRVRYTLLTPTEKFSLHPLTGELVVTGQLDRESEPQYILKAEARDQPTKGHQLFSVTDVIVTLEDINDNPPQCITEHSSLKVPEDMPLGTVLTFLDASDPDLGPAGEVKYILVDDVHGTFRVDPMTGALSLEKELDFERRAGYNLSFWASDSGRPLARRTLCHVEVLVMDVNENLHSPHFSSFVYQGQVQENSPAGTQVMVVTAQDDDSGLDGELQYFLRAGTGLEAFSINQDTGMLETLAPLDREFTPYYWLTVLAVDRGSVPLSAVTEVYIEVTDINDNIPSMSRPVFYPSVKEDAPLGTSVLQLEAWDPDFSSQGKLTFNLTSGNHMGHFIVHPFTGLLSTAKQLDRENKDEYVLEVTVQDNGDPPLRSTSRVVVCVLDVNDNSPMFSHKLFNVRLSERLSPLSPEPVYRLVASDPDEGLNGSITYSIEESDEESFRIDPVTGVVSSSSTFAAGEYNILTIKATDSGQPALSTSVRLHIEWIPQPRPSSIPLSFDESHYSFAVMETDPVNHMLGVISVEGRPGLFWFHISDGDKDMDFDIEKTTGSIVIARPLDTRRKSSYNLTVEVTDGFHTIATQVHILMIANINHHRPQFLQDHYDIRVPQDTLPGVELLRVQATDQDHGKGLIYTIHSSRDPGSANLFQLDPSSGVLVTVGTLDLHSGPSQHILTVMVRDQEMPIKRNFVWVTIHVEDGNLHSPHFTQPRYEANVPDTTTPGTELLQVRAVDADRGANAEVHYSFLKGNSEGFFNIDSLLGIITVAQRLDHVHLNRHALTVKAEDQGSPQRHDLAMVVVHVHPSDSSAPIFSKDEYFIEIPESVPIGSPILLISAASSSDVTYELREGNKNSVFSMNSYSGLISTQKRLDHEKVSSYQLKIRGSNMAGVFTEVVALVYIIDENDNAPAFLKSTFVGHISEAAPLHSLILGEDNSPLVIRASDSDQEANSLLVYKILEPEALKFFKIDPSMGTLTITSELDYETTPLFQFSIYVHDQGTPILFAPRSARVIIHVRDVNDSPPRFSEQIYEVAVVEPIHPGMELLTVQAEDNDSKVTYSIKTSNTDEAVTIHPITGQISVVNPAALRLFPKLNIRAFDGLYQDTAVVKISLTQALDKSLQFDQDIYRARVTENTPHSNVLVILGVHGNHLNDTLSYFLLNGTDLFHMVKSAGVLQTRGVTFDREQQDTHEVAVEVRDNRVPRRVAQALVRVSVEDVNDNIPEFQHLPYYTVIQDGTEPGDVLFQVSATDKDLGANGTVTYGFAEDYAYFRIDPYVGDISLKKPFDYQALNKYHLRVTARDAGTPPLQTEVEVHVTVRNKSNPLFQSPYYKVKVPENITLYTPILHTQARSPEGLRLIYNIVEEEPLMLFTTDFKTGVLTVTGPLDYESKNKHVFTVRATDTALGSFSEATVEVLVEDINDNPPTFSQLVYSTSVSEGSPAQTPVIQLLASDQDSGQNQDVSYQIVEDGSDVSKFFRINGSTGEMFTIQELDYEAHQHFRVKVRATDRGDPPLTGETLVVVNVSDINDNPPEFREPQYEANVSELATCGHLVLKVQALDPDIGDTSRLEYLILSGNQDRHFSINSTSGIISMFNLCKKQLDSSYNLRVGASDGVFQATVPVYINTTNANKYSPEFQQNVYEAELAENAKVGTKVIELLAIDKDSGPYGTVDYTIINKLAGERFFINPSGQITTLQKLDRENSTERVIAIKIMARDGGGKVAFCTVKIILTDENDNAPQFKASGYTVSIPSNVSRDSPIIQVLAYDADEGRNADVTYSVDSTEDLAEEIIEVNPTTGVVKVKESLVGLENKAVDFNIKAQDGGPPHWDSLVPVRLQVVPNEIPLPKFSEPLYTFSASEDLPEGSEIGSVKAVAAQDPIIYSLVQGTTPESNSDDVFSLDQDTGVLKVKKAMDHESTKWYQIDLMAHCPHEDTDLVSLVSVNIQVEDVNDNRPVFEADPYKAFLTENMPGGTTVIQVTANDQDTGSDGQVSYRLSVEPGSNIHQLFAVDSESGWITTLQELDCETQQTYRFYVVAFDHGQTIQLSSQALVEVSITDENDNPPRFASEDYRGSVVENNEPGELVATLKTLDADISEQNRQVTCYITEGDPLGQFSISQVGDEWRITSRKTLDREHIAKYLLRITASDGKFQASVPVEVFVLDINDNSPQCSQLLYTGKVREDVTPGHFILKVSAIDVDMDTNAQITYSLHGPGAQEFKLDPHTGELTTLSVLDRERKDVYNLVAKATDGGGQSCQAEVTLHIEDVNDNAPRFFPSHCAVAVFDNTTVKTPVAVVFARDPDQGVNAQVVYSLTDSADGQFSIDATSGVIRLEKPLQVRSSSAVELTVRASDLGTPIPLSTLGTVTVSIVGLEDYLPIFLNSEHSTQVPEDALIDMEVLYLATLTRPGSEKTGYHITGGNEQGKFRLDAHTGILYVNGSLDFETNPKYFLSIECSRKSSSSLSDVTTIVINVTDVNEHHPRFTHDLYTVRVLENAIVGDVILTVSASDDDGPVNSVITYSLVGGNQLGHFTIDPKKGKLQVAKALDWEQTPSYSLRIRATDSGQPPLHEDTEVAVEVVDVNDNPPRFFQLNYSTAVQENSPIGIKVLQLILDDPDSPQNGPPYFFRITEGNTGSVFRVTPDGWLVTAGSLSRRAQEWYQLHIEVSDSGLPPLSSSTLVRVHITEQSRYPPSTLPLEIFITKGEEEFQGGMVGKIHATDRDPQDTLTYSLDREGSLGKYFTVGASDGKIIASQGLPRGRYLFNVTVSDGTFTTTTGVHVHVWHMGQEAPQQAVWLGFHQLTPEELVSDHWRNLQRFLSNILDIKRANIHLASLQPAEVTAGVDVLLAFEGHSGTSYDLQELASAIAHSAKEMEHSVGIQMRSALPVVPCQGPSCQDQTCQETVSLEPRVGPSYSTARLSILTPRHHLGKNCSCNGTTWRFSGQSYMRYRPLEAQNWQIHFYLKTLQPWALLMFTNETASISLKLANGFLHLEYRCPGGFYGNLSSHRPVNDGQWHSMLLEERDTSVHLLVDITDNTSLVIPEECQGLRTERHLLLGGLVPSNPSSNVSLGFEGCLDAVVVNSERLELLGHRKKMAGYLETWALSQCCWPGTTCSQNPCLNGGSCSPALGSGYLCRCPPLFSGRNCELGRENCTSAPCQEGGTCVSSPEGTSCSCPHPYTGDRCEMEARGCSGGHCLITPEIKRGDWGQQEFLVIIVALPLLIIATVGLLLYCRRCKSHKPVAMEDPDLLARSIGVDTQASPAIELDPLNAGSCNDLNQLEPSKTSVPNELVTFGPSSKQRPMVCSVPPRLPPAVVSSHPGHEPIIKRTWSGEELVYPSGAAVWPPTYSRKEHWEYPHPEAMQGPLPPSPRRHVSPAVMPDPAGLYGGFPFPLELENKRAPLPPRYSNQNLEDLIPPRPPSPREHLLAPCLNEYTAISYYHSQFRQGGGGPCLAEGGYKGVSMRLSRAGPSYADCEVNGGPAPGRSQPRAPPNYEGSDMVESDYGSCEEVMF.

An N-terminal signal peptide occupies residues 1–18 (MTLVLLGVAMVLLHRAAC). Residues 19 to 4050 (EKPLEETITP…IKRGDWGQQE (4032 aa)) are Extracellular-facing. 2 consecutive Cadherin domains span residues 34 to 148 (THSL…KPLF) and 149 to 256 (SPPS…PPVI). N-linked (GlcNAc...) asparagine glycosylation is found at N39, N210, N280, and N330. 31 consecutive Cadherin domains span residues 363–458 (EKAV…APVF), 459–564 (NRSS…QPMF), 565–669 (EEVN…VPVQ), 716–820 (DHFP…PPRF), 821–925 (PPGG…PPQC), 926–1032 (ITEH…SPHF), 1033–1142 (SSFV…RPVF), 1138–1242 (SRPV…SPMF), 1243–1346 (SHKL…SSIP), 1350–1448 (DESH…RPQF), 1449–1555 (LQDH…SPHF), 1556–1660 (TQPR…APIF), 1661–1758 (SKDE…APAF), 1759–1872 (LKST…PPRF), 1873–1968 (SEQI…SLQF), 1969–2070 (DQDI…IPEF), 2071–2171 (QHLP…NPLF), 2172–2272 (QSPY…PPTF), 2273–2379 (SQLV…PPEF), 2380–2481 (REPQ…SPEF), 2482–2585 (QQNV…APQF), 2586–2692 (KASG…LPKF), 2693–2799 (SEPL…RPVF), 2800–2908 (EADP…PPRF), 2909–3013 (ASED…SPQC), 3014–3115 (SQLL…APRF), 3116–3220 (FPSH…LPIF), 3221–3323 (LNSE…HPRF), 3324–3428 (THDL…PPRF), 3429–3533 (FQLN…PPST), and 3534–3631 (LPLE…APQQ). N-linked (GlcNAc...) asparagine glycans are attached at residues N459, N568, N627, and N789. The N-linked (GlcNAc...) asparagine glycan is linked to N996. N-linked (GlcNAc...) asparagine glycosylation is found at N1175, N1276, and N1417. 13 N-linked (GlcNAc...) asparagine glycosylation sites follow: N1899, N1998, N2007, N2102, N2165, N2183, N2325, N2368, N2387, N2430, N2470, N2547, and N2597. 3 N-linked (GlcNAc...) asparagine glycosylation sites follow: N3127, N3278, and N3312. Residues N3432, N3603, N3770, N3774, N3815, N3842, N3875, and N3906 are each glycosylated (N-linked (GlcNAc...) asparagine). The 172-residue stretch at 3775–3946 (GTTWRFSGQS…YLETWALSQC (172 aa)) folds into the Laminin G-like domain. Intrachain disulfides connect C3914/C3946, C3953/C3964, C3958/C3974, and C3976/C3985. EGF-like domains are found at residues 3949-3986 (PGTT…RNCE) and 3988-4024 (GREN…DRCE). A glycan (N-linked (GlcNAc...) asparagine) is linked at N3991. Intrachain disulfides connect C3992–C4003, C3997–C4012, and C4014–C4023. Residues 4051 to 4071 (FLVIIVALPLLIIATVGLLLY) traverse the membrane as a helical segment. Residues 4072 to 4351 (CRRCKSHKPV…DYGSCEEVMF (280 aa)) lie on the Cytoplasmic side of the membrane. A disordered region spans residues 4313-4340 (DCEVNGGPAPGRSQPRAPPNYEGSDMVE).

As to quaternary structure, homodimer.

It is found in the cell membrane. The protein localises to the cell junction. The protein resides in the golgi apparatus. Its subcellular location is the trans-Golgi network. Functionally, involved in the regulation of cell migration. May be involved in mediating the organization of the parallel fibers of granule cells during cerebellar development. The chain is Protocadherin Fat 2 (Fat2) from Mus musculus (Mouse).